The chain runs to 203 residues: Thymidylate kinase (203 aa).

ATP is bound at residue 9–16 (GPEGAGKT).

Belongs to the thymidylate kinase family.

It catalyses the reaction dTMP + ATP = dTDP + ADP. Functionally, phosphorylation of dTMP to form dTDP in both de novo and salvage pathways of dTTP synthesis. This Staphylococcus epidermidis (strain ATCC 35984 / DSM 28319 / BCRC 17069 / CCUG 31568 / BM 3577 / RP62A) protein is Thymidylate kinase.